The sequence spans 401 residues: F-box protein At1g69090 (401 aa).

A disordered region spans residues 1 to 23 (MASPTLALAQSPPPKSPAVSVSQ). The F-box domain occupies 27–74 (HCWSKLPLDLMQLVFERLAFLDFERAKSVCSSWQFGSKQSKPNNQIPW).

The sequence is that of F-box protein At1g69090 from Arabidopsis thaliana (Mouse-ear cress).